Consider the following 126-residue polypeptide: Small ribosomal subunit protein uS13 (126 aa).

The disordered stretch occupies residues 92 to 126 (HRMGLPVRGQRTRTNARTRRGRRQTVAGKKKAPGK). A compositionally biased stretch (basic residues) spans 101–126 (QRTRTNARTRRGRRQTVAGKKKAPGK).

It belongs to the universal ribosomal protein uS13 family. As to quaternary structure, part of the 30S ribosomal subunit. Forms a loose heterodimer with protein S19. Forms two bridges to the 50S subunit in the 70S ribosome.

Located at the top of the head of the 30S subunit, it contacts several helices of the 16S rRNA. In the 70S ribosome it contacts the 23S rRNA (bridge B1a) and protein L5 of the 50S subunit (bridge B1b), connecting the 2 subunits; these bridges are implicated in subunit movement. Contacts the tRNAs in the A and P-sites. The polypeptide is Small ribosomal subunit protein uS13 (Nostoc sp. (strain PCC 7120 / SAG 25.82 / UTEX 2576)).